A 556-amino-acid chain; its full sequence is 2-succinyl-5-enolpyruvyl-6-hydroxy-3-cyclohexene-1-carboxylate synthase (556 aa).

Belongs to the TPP enzyme family. MenD subfamily. As to quaternary structure, homodimer. Mg(2+) serves as cofactor. The cofactor is Mn(2+). Thiamine diphosphate is required as a cofactor.

The catalysed reaction is isochorismate + 2-oxoglutarate + H(+) = 5-enolpyruvoyl-6-hydroxy-2-succinyl-cyclohex-3-ene-1-carboxylate + CO2. Its pathway is quinol/quinone metabolism; 1,4-dihydroxy-2-naphthoate biosynthesis; 1,4-dihydroxy-2-naphthoate from chorismate: step 2/7. The protein operates within quinol/quinone metabolism; menaquinone biosynthesis. Functionally, catalyzes the thiamine diphosphate-dependent decarboxylation of 2-oxoglutarate and the subsequent addition of the resulting succinic semialdehyde-thiamine pyrophosphate anion to isochorismate to yield 2-succinyl-5-enolpyruvyl-6-hydroxy-3-cyclohexene-1-carboxylate (SEPHCHC). This chain is 2-succinyl-5-enolpyruvyl-6-hydroxy-3-cyclohexene-1-carboxylate synthase, found in Shigella sonnei (strain Ss046).